Consider the following 358-residue polypeptide: Heme A synthase (358 aa).

8 consecutive transmembrane segments (helical) span residues 22–42, 107–127, 133–153, 172–192, 208–228, 269–289, 302–322, and 324–344; these read IQVWLYTILLLCFAIVLVGGA, VLGRFVGLVALLGLVLFWVTK, IFLQLLTVPILIAMQGIIGWW, LAIHLIAACLVIIFVTYLSRG, FAGWLVFLILVEIYFGALVAG, FVHRCFSYFLFITAVIHALYV, AIFLCIMIVMQAFLGIITLLH, and VPISLGLIHQGGALVVLCFSV. Heme is bound at residue histidine 271. A heme-binding site is contributed by histidine 332.

The protein belongs to the COX15/CtaA family. Type 2 subfamily. Interacts with CtaB. Heme b serves as cofactor.

The protein localises to the cell membrane. The enzyme catalyses Fe(II)-heme o + 2 A + H2O = Fe(II)-heme a + 2 AH2. Its pathway is porphyrin-containing compound metabolism; heme A biosynthesis; heme A from heme O: step 1/1. Catalyzes the conversion of heme O to heme A by two successive hydroxylations of the methyl group at C8. The first hydroxylation forms heme I, the second hydroxylation results in an unstable dihydroxymethyl group, which spontaneously dehydrates, resulting in the formyl group of heme A. The sequence is that of Heme A synthase from Bartonella bacilliformis (strain ATCC 35685 / KC583 / Herrer 020/F12,63).